Reading from the N-terminus, the 563-residue chain is Serine/threonine-protein kinase WNK8 (563 aa).

The region spanning 29-286 (IRYDDVLGRG…ALELSKDPFL (258 aa)) is the Protein kinase domain. Residues 109-112 (TELF) and Lys-159 contribute to the ATP site. Residue Asp-176 is the Proton acceptor of the active site. Residues 426-436 (TSSHHNQNSPR) show a composition bias toward polar residues. The segment at 426–459 (TSSHHNQNSPRLTHEDHEAANQQTVNSKDEEAAG) is disordered. Residue Ser-509 is modified to Phosphoserine.

It belongs to the protein kinase superfamily. Ser/Thr protein kinase family. WNK subfamily. Interacts with RGS1 and GB1, but not with GPA1. The association with RGS1 at the plasma membrane is triggered by induction of glucose. Binds to EDM2 in nucleus. Post-translationally, autophosphorylated.

The protein resides in the nucleus. The catalysed reaction is L-seryl-[protein] + ATP = O-phospho-L-seryl-[protein] + ADP + H(+). It catalyses the reaction L-threonyl-[protein] + ATP = O-phospho-L-threonyl-[protein] + ADP + H(+). In terms of biological role, regulates flowering time by modulating the photoperiod pathway. Phosphorylates the vacuolar ATPase subunit C (VATC) and RGS1. Regulates EDM2 that, in turn, modulates development processes. This Arabidopsis thaliana (Mouse-ear cress) protein is Serine/threonine-protein kinase WNK8 (WNK8).